The chain runs to 205 residues: Penta-EF hand domain-containing protein 2 (205 aa).

EF-hand domains lie at 45-75 (EMQSWFMRVDANRSGTISSGELQYLNIGGTP), 76-111 (LGIETATKLIKVFDHNKNGQIDFYEYAALHQFINNL), and 119-141 (DRNFSGTIDANEIYNALITSGFQ). D54, N56, S58, T60, E65, D89, N91, N93, Q95, and E100 together coordinate Ca(2+).

This sequence belongs to the Peflin/Sorcin family. In terms of assembly, in contrast to pefA, does not form homodimers in presence of Ca(2+). May form heterodimers with pefA.

The protein localises to the cytoplasm. It localises to the membrane. This Dictyostelium discoideum (Social amoeba) protein is Penta-EF hand domain-containing protein 2 (pefB).